Consider the following 320-residue polypeptide: L-lactate dehydrogenase 1 (320 aa).

NAD(+)-binding positions include Val18, Asp39, Arg44, Tyr69, and 83-84 (GA). Substrate contacts are provided by Gln86 and Arg92. Residues Ser105, 122–124 (AAN), and Ser147 contribute to the NAD(+) site. 124–127 (NPVD) contacts substrate. Substrate is bound at residue 152 to 155 (DSSR). The active-site Proton acceptor is His179. At Tyr223 the chain carries Phosphotyrosine. Thr232 provides a ligand contact to substrate.

The protein belongs to the LDH/MDH superfamily. LDH family. Homotetramer.

It is found in the cytoplasm. The catalysed reaction is (S)-lactate + NAD(+) = pyruvate + NADH + H(+). It functions in the pathway fermentation; pyruvate fermentation to lactate; (S)-lactate from pyruvate: step 1/1. Functionally, catalyzes the conversion of lactate to pyruvate. The protein is L-lactate dehydrogenase 1 of Lactiplantibacillus plantarum (strain ATCC BAA-793 / NCIMB 8826 / WCFS1) (Lactobacillus plantarum).